We begin with the raw amino-acid sequence, 311 residues long: Olfactory receptor 10G7 (311 aa).

Topologically, residues 1–23 (MSNATLLTAFILTGLPHAPGLDA) are extracellular. An N-linked (GlcNAc...) asparagine glycan is attached at Asn-3. Residues 24–44 (PLFGIFLVVYVLTVLGNLLIL) form a helical membrane-spanning segment. Topologically, residues 45 to 52 (LVIRVDSH) are cytoplasmic. Residues 53-73 (LHTPMYYFLTNLSFIDMWFST) traverse the membrane as a helical segment. Residues 74-98 (VTVPKMLMTLVSPSGRTISFHSCVA) are Extracellular-facing. Cys-96 and Cys-188 are joined by a disulfide. A helical membrane pass occupies residues 99–119 (QLYFFHFLGSTECFLYTVMSY). The Cytoplasmic portion of the chain corresponds to 120–138 (DRYLAISYPLRYTNMMTGR). A helical membrane pass occupies residues 139–159 (SCALLATGTWLSGSLHSAVQT). Over 160–196 (ILTFHLPYCGPNQIQHYFCDAPPILKLACADTSANEM) the chain is Extracellular. The helical transmembrane segment at 197–216 (VIFVNIGLVASGCFVLIVLS) threads the bilayer. The Cytoplasmic portion of the chain corresponds to 217 to 236 (YVSIVCSILRIRTSEGRHRA). The helical transmembrane segment at 237-257 (FQTCASHCIVVLCFFGPGLFI) threads the bilayer. Residues 258–268 (YLRPGSRDALH) lie on the Extracellular side of the membrane. The chain crosses the membrane as a helical span at residues 269–289 (GVVAVFYTTLTPLFNPVVYTL). Residues 290–311 (RNKEVKKALLKLKNGSVFAQGE) lie on the Cytoplasmic side of the membrane.

It belongs to the G-protein coupled receptor 1 family.

The protein resides in the cell membrane. Its function is as follows. Odorant receptor. The polypeptide is Olfactory receptor 10G7 (OR10G7) (Homo sapiens (Human)).